The sequence spans 213 residues: Large ribosomal subunit protein uL1 (213 aa).

This sequence belongs to the universal ribosomal protein uL1 family. As to quaternary structure, part of the 50S ribosomal subunit.

Binds directly to 23S rRNA. Probably involved in E site tRNA release. Its function is as follows. Protein L1 is also a translational repressor protein, it controls the translation of its operon by binding to its mRNA. The sequence is that of Large ribosomal subunit protein uL1 from Methanoculleus marisnigri (strain ATCC 35101 / DSM 1498 / JR1).